Consider the following 1000-residue polypeptide: SEC23-interacting protein (1000 aa).

The interaction with SEC23A stretch occupies residues 1 to 367 (MAERKPNGGS…YTEEFSEKLE (367 aa)). Residues 133–252 (FSPSISKAQP…QQVPARPGAP (120 aa)) form a disordered region. Low complexity predominate over residues 154-167 (SYLPSQPSSLPPSY). Over residues 207–218 (PGPPAHPPPSGP) the composition is skewed to pro residues. The segment covering 235–246 (SSVQSPAQQQVP) has biased composition (low complexity). Positions 644 to 707 (KEVLTLQETL…NFVEHKAAKL (64 aa)) constitute an SAM domain. The disordered stretch occupies residues 716 to 748 (AVAATSTKGQEQSAQKTKDMASLPSESNEPKRK). Phosphoserine is present on residues Ser-737 and Ser-926. In terms of domain architecture, DDHD spans 779-989 (LDFEPEIFFA…ALLLLKEIYR (211 aa)).

This sequence belongs to the PA-PLA1 family. Interacts with SEC23A. Ubiquitously expressed with stronger levels detected in heart, liver and skeletal muscle.

The protein resides in the cytoplasmic vesicle. It is found in the COPII-coated vesicle membrane. It localises to the endoplasmic reticulum. Functionally, plays a role in the organization of endoplasmic reticulum exit sites. Specifically binds to phosphatidylinositol 3-phosphate (PI(3)P), phosphatidylinositol 4-phosphate (PI(4)P) and phosphatidylinositol 5-phosphate (PI(5)P). The chain is SEC23-interacting protein (SEC23IP) from Homo sapiens (Human).